A 614-amino-acid chain; its full sequence is RNA polymerase sigma factor RpoD (614 aa).

The segment at 168–245 (DPDDNIAAPT…PEEKRSYPQG (78 aa)) is disordered. Positions 193-209 (EADDDEEESEGGDDEEE) are enriched in acidic residues. The segment covering 215 to 232 (TRSSQPSVSVRYPSSFSD) has biased composition (polar residues). The tract at residues 380–450 (MVEANLRLVI…TRSIADQART (71 aa)) is sigma-70 factor domain-2. Positions 404-407 (DLIQ) match the Interaction with polymerase core subunit RpoC motif. The segment at 459–535 (ETINKLNRIS…DSTMQSPIYV (77 aa)) is sigma-70 factor domain-3. Residues 548 to 601 (VLSGLTAREAKVLRMRFGIDMNTDHTLEEVGKQFDVTRERIRQIEAKAWRKLRH) are sigma-70 factor domain-4. Positions 574-593 (LEEVGKQFDVTRERIRQIEA) form a DNA-binding region, H-T-H motif.

The protein belongs to the sigma-70 factor family. RpoD/SigA subfamily. In terms of assembly, interacts transiently with the RNA polymerase catalytic core.

It is found in the cytoplasm. Sigma factors are initiation factors that promote the attachment of RNA polymerase to specific initiation sites and are then released. This sigma factor is the primary sigma factor during exponential growth. The protein is RNA polymerase sigma factor RpoD of Pseudomonas putida (Arthrobacter siderocapsulatus).